A 464-amino-acid polypeptide reads, in one-letter code: Probable glycosyltransferase Saci_1499 (464 aa).

6 consecutive transmembrane segments (helical) span residues 6–26, 300–320, 337–357, 373–393, 416–436, and 439–459; these read IFLN…QIIL, LIIY…STLL, ALLF…SLAL, LTAF…KGLL, IIAI…LYIY, and YYVT…TMLL.

It belongs to the glycosyltransferase 2 family.

It is found in the cell membrane. Its function is as follows. Probably part of a 4-gene DNA damage response locus in which the upstream ups system, in combination with this downstream locus, functions in homologous recombination to rescue Sulfolobales from DNA-damaging threats. This Sulfolobus acidocaldarius (strain ATCC 33909 / DSM 639 / JCM 8929 / NBRC 15157 / NCIMB 11770) protein is Probable glycosyltransferase Saci_1499.